A 720-amino-acid chain; its full sequence is Photosystem I P700 chlorophyll a apoprotein A1 (720 aa).

The next 8 membrane-spanning stretches (helical) occupy residues 61 to 84 (VFSA…FHGA), 147 to 170 (LYCT…FHYH), 186 to 210 (LNHH…HVSL), 282 to 300 (TAHH…GHMY), 337 to 360 (WHAQ…HHMY), 376 to 402 (LSLF…IFMV), 424 to 446 (AIVS…LYIH), and 522 to 540 (FLVH…LILL). Residues cysteine 564 and cysteine 573 each coordinate [4Fe-4S] cluster. The next 2 helical transmembrane spans lie at 580–601 (HVFL…HFSW) and 655–677 (LSAY…MFLF). Position 666 (histidine 666) interacts with chlorophyll a'. Residues methionine 674 and tyrosine 682 each coordinate chlorophyll a. Tryptophan 683 contacts phylloquinone. Residues 715 to 720 (AVGVAH) traverse the membrane as a helical segment.

Belongs to the PsaA/PsaB family. In terms of assembly, the PsaA/B heterodimer binds the P700 chlorophyll special pair and subsequent electron acceptors. PSI consists of a core antenna complex that captures photons, and an electron transfer chain that converts photonic excitation into a charge separation. The eukaryotic PSI reaction center is composed of at least 11 subunits. Requires P700 is a chlorophyll a/chlorophyll a' dimer, A0 is one or more chlorophyll a, A1 is one or both phylloquinones and FX is a shared 4Fe-4S iron-sulfur center. as cofactor.

Its subcellular location is the plastid. The protein localises to the chloroplast thylakoid membrane. It catalyses the reaction reduced [plastocyanin] + hnu + oxidized [2Fe-2S]-[ferredoxin] = oxidized [plastocyanin] + reduced [2Fe-2S]-[ferredoxin]. Its function is as follows. PsaA and PsaB bind P700, the primary electron donor of photosystem I (PSI), as well as the electron acceptors A0, A1 and FX. PSI is a plastocyanin-ferredoxin oxidoreductase, converting photonic excitation into a charge separation, which transfers an electron from the donor P700 chlorophyll pair to the spectroscopically characterized acceptors A0, A1, FX, FA and FB in turn. Oxidized P700 is reduced on the lumenal side of the thylakoid membrane by plastocyanin. This is Photosystem I P700 chlorophyll a apoprotein A1 from Sequoia sempervirens (California redwood).